The sequence spans 606 residues: Scavenger receptor class A member 3 (606 aa).

Residues 1 to 56 (MKVRSAGSDRDVLCVTEEDLAGEDEDMPSFPCTQEGRAGPRCNRCQKNLSLHTSVR) are Cytoplasmic-facing. Residues 57 to 77 (ILYLFLTLLLVAVAVLASLVF) form a helical; Signal-anchor for type II membrane protein membrane-spanning segment. The Extracellular segment spans residues 78–606 (RKVDSLSEDI…PGPPGNQSPY (529 aa)). N-linked (GlcNAc...) asparagine glycosylation is found at asparagine 115, asparagine 182, asparagine 224, asparagine 257, asparagine 313, asparagine 337, asparagine 365, asparagine 400, asparagine 430, and asparagine 451. The interval 455-606 (IRGVPGPPGP…PGPPGNQSPY (152 aa)) is disordered. Collagen-like domains are found at residues 456 to 558 (RGVP…PGPS) and 559 to 601 (GPQG…GPPG). The span at 497–516 (PQGQPGEPGPVGERGPAGPR) shows a compositional bias: low complexity. The span at 526-535 (GSFGTGGPRG) shows a compositional bias: gly residues. Composition is skewed to pro residues over residues 548–558 (PEGPPGSPGPS) and 591–606 (PGLP…QSPY).

Its subcellular location is the endoplasmic reticulum membrane. The protein resides in the golgi apparatus membrane. In terms of biological role, seems to protect cells by scavenging oxidative molecules or harmful products of oxidation. This Mus musculus (Mouse) protein is Scavenger receptor class A member 3 (Scara3).